The sequence spans 37 residues: LFECSFSCEQEKEGDKPCKKKKCKGGWKCKFNMCVKV.

3 disulfides stabilise this stretch: C4-C18, C8-C29, and C23-C34.

Form 1 and form 2 may dimerize. In terms of tissue distribution, expressed by the venom gland.

It is found in the secreted. Lethal neurotoxin that blocks neuromuscular transmission. Acts cooperatively to potentiate the activity of huwentoxin-I. The sequence is that of U1-theraphotoxin-Hs1b from Cyriopagopus schmidti (Chinese bird spider).